Consider the following 240-residue polypeptide: MAPK-interacting and spindle-stabilizing protein-like (240 aa).

The disordered stretch occupies residues 1–240 (MSDEFSLADA…PMPGGPHSYH (240 aa)). At Ser-2 the chain carries N-acetylserine. Phosphoserine occurs at positions 2, 6, and 15. The span at 16 to 26 (PAKTSAVSNTK) shows a compositional bias: polar residues. Over residues 34–43 (WPGSNPWNNP) the composition is skewed to low complexity. Composition is skewed to pro residues over residues 44 to 66 (SAPPAVPSGLPPSATPSPVPFGP), 74 to 122 (SVPP…PELP), 159 to 185 (PNMPYPSPGPYPAPPPPQAPGAAPPVP), and 193 to 202 (AWGPPAPYPA).

The protein belongs to the MISS family.

The protein is MAPK-interacting and spindle-stabilizing protein-like (MAPK1IP1L) of Bos taurus (Bovine).